The following is a 214-amino-acid chain: Large ribosomal subunit protein uL3 (214 aa).

The segment at Ala-133–Arg-155 is disordered. Gln-151 is subject to N5-methylglutamine.

It belongs to the universal ribosomal protein uL3 family. Part of the 50S ribosomal subunit. Forms a cluster with proteins L14 and L19. In terms of processing, methylated by PrmB.

One of the primary rRNA binding proteins, it binds directly near the 3'-end of the 23S rRNA, where it nucleates assembly of the 50S subunit. This chain is Large ribosomal subunit protein uL3, found in Cellvibrio japonicus (strain Ueda107) (Pseudomonas fluorescens subsp. cellulosa).